The following is a 200-amino-acid chain: MAAAWTVVLVTLVLGLAVAGPVPTSKPTTTGKGCHIGRFKSLSPQELASFKKARDALEESLKLKNWSCSSPVFPGNWDLRLLQVRERPVALEAELALTLKVLEAAAGPALEDVLDQPLHTLHHILSQLQACIQPQPTAGPRPRGRLHHWLHRLQEAPKKESAGCLEASVTFNLFRLLTRDLKYVADGNLCLRTSTHPEST.

An N-terminal signal peptide occupies residues 1 to 19 (MAAAWTVVLVTLVLGLAVA). Asn65 carries N-linked (GlcNAc...) asparagine glycosylation. The cysteines at positions 68 and 164 are disulfide-linked.

It belongs to the lambda interferon family.

The protein localises to the secreted. Cytokine with antiviral, antitumour and immunomodulatory activities. Plays a critical role in the antiviral host defense, predominantly in the epithelial tissues. Acts as a ligand for the heterodimeric class II cytokine receptor composed of IL10RB and IFNLR1, and receptor engagement leads to the activation of the JAK/STAT signaling pathway resulting in the expression of IFN-stimulated genes (ISG), which mediate the antiviral state. Has a restricted receptor distribution and therefore restricted targets: is primarily active in epithelial cells and this cell type-selective action is because of the epithelial cell-specific expression of its receptor IFNLR1. Exerts an immunomodulatory effect by up-regulating MHC class I antigen expression. This Homo sapiens (Human) protein is Interferon lambda-1 (IFNL1).